The chain runs to 213 residues: ATP-dependent Clp protease proteolytic subunit (213 aa).

S114 (nucleophile) is an active-site residue. H139 is a catalytic residue.

Belongs to the peptidase S14 family. As to quaternary structure, fourteen ClpP subunits assemble into 2 heptameric rings which stack back to back to give a disk-like structure with a central cavity, resembling the structure of eukaryotic proteasomes.

The protein localises to the cytoplasm. The catalysed reaction is Hydrolysis of proteins to small peptides in the presence of ATP and magnesium. alpha-casein is the usual test substrate. In the absence of ATP, only oligopeptides shorter than five residues are hydrolyzed (such as succinyl-Leu-Tyr-|-NHMec, and Leu-Tyr-Leu-|-Tyr-Trp, in which cleavage of the -Tyr-|-Leu- and -Tyr-|-Trp bonds also occurs).. Cleaves peptides in various proteins in a process that requires ATP hydrolysis. Has a chymotrypsin-like activity. Plays a major role in the degradation of misfolded proteins. This chain is ATP-dependent Clp protease proteolytic subunit, found in Ectopseudomonas mendocina (strain ymp) (Pseudomonas mendocina).